We begin with the raw amino-acid sequence, 140 residues long: Probable transport accessory protein MmpS4 (140 aa).

The chain crosses the membrane as a helical span at residues 2 to 22; it reads LMRTWIPLVILVVVIVGGFTV.

It belongs to the MmpS family.

The protein localises to the cell membrane. This chain is Probable transport accessory protein MmpS4 (mmpS4), found in Mycobacterium bovis (strain ATCC BAA-935 / AF2122/97).